The primary structure comprises 216 residues: uncharacterized protein (216 aa).

This is an uncharacterized protein from Methylophilus leisingeri (strain DSM 6813 / VKM B-2013 / DM11).